The primary structure comprises 76 residues: Exodeoxyribonuclease 7 small subunit (76 aa).

It belongs to the XseB family. As to quaternary structure, heterooligomer composed of large and small subunits.

The protein resides in the cytoplasm. It catalyses the reaction Exonucleolytic cleavage in either 5'- to 3'- or 3'- to 5'-direction to yield nucleoside 5'-phosphates.. In terms of biological role, bidirectionally degrades single-stranded DNA into large acid-insoluble oligonucleotides, which are then degraded further into small acid-soluble oligonucleotides. The protein is Exodeoxyribonuclease 7 small subunit of Legionella pneumophila (strain Paris).